A 189-amino-acid polypeptide reads, in one-letter code: Capsid protein (189 aa).

This sequence belongs to the tymoviruses capsid protein family.

The protein resides in the virion. Its function is as follows. Self-assembles to form a T=3 icosahedral capsid composed of 180 copies of the capsid protein. The capsid encapsulates the single-stranded RNA genome. A pentameric unit may be lost during decapsidation. In Brassica, this protein is Capsid protein.